Here is a 295-residue protein sequence, read N- to C-terminus: Fructose-bisphosphate aldolase class 1 (295 aa).

Glutamate 176 functions as the Proton acceptor in the catalytic mechanism. The active-site Schiff-base intermediate with dihydroxyacetone-P is lysine 213.

It belongs to the class I fructose-bisphosphate aldolase family.

The enzyme catalyses beta-D-fructose 1,6-bisphosphate = D-glyceraldehyde 3-phosphate + dihydroxyacetone phosphate. Its pathway is carbohydrate degradation; glycolysis; D-glyceraldehyde 3-phosphate and glycerone phosphate from D-glucose: step 4/4. In Clostridium beijerinckii (strain ATCC 51743 / NCIMB 8052) (Clostridium acetobutylicum), this protein is Fructose-bisphosphate aldolase class 1.